A 156-amino-acid chain; its full sequence is Small ribosomal subunit protein uS7 (156 aa).

It belongs to the universal ribosomal protein uS7 family. As to quaternary structure, part of the 30S ribosomal subunit. Contacts proteins S9 and S11.

Its function is as follows. One of the primary rRNA binding proteins, it binds directly to 16S rRNA where it nucleates assembly of the head domain of the 30S subunit. Is located at the subunit interface close to the decoding center, probably blocks exit of the E-site tRNA. This chain is Small ribosomal subunit protein uS7, found in Campylobacter curvus (strain 525.92).